The sequence spans 329 residues: Transmembrane protein I329L (329 aa).

The first 31 residues, 1-31, serve as a signal peptide directing secretion; the sequence is MLRVFIFFVFLGSGLTGRIKPQVTCKYFISE. N-linked (GlcNAc...) asparagine; by host glycans are attached at residues N32, N39, N44, N76, N82, and N101. The Extracellular portion of the chain corresponds to 32 to 239; that stretch reads NNTWYKYNVT…NTERYKSCYP (208 aa). An LRR repeat occupies 112–133; sequence ELKFLDLRYNDLQVIDYNILRK. N-linked (GlcNAc...) asparagine; by host glycans are attached at residues N185 and N219. C195 and C237 are disulfide-bonded. A helical transmembrane segment spans residues 240 to 260; it reads LVFISILCSCISFLFLFICLL. Residues 261-329 are Cytoplasmic-facing; the sequence is RSICKKYSCT…EKKVSCSRRK (69 aa).

Belongs to the asfivirus I329L family. In terms of processing, highly glycosylated.

Its subcellular location is the host endoplasmic reticulum membrane. It is found in the host Golgi apparatus membrane. Viral TLR3 homolog that probably prevents TLR3 dimerization and subsequent induction of IFN. Inhibits dsRNA-stimulated activation of NF-kB and IRF3. This chain is Transmembrane protein I329L, found in Ornithodoros (relapsing fever ticks).